The following is a 166-amino-acid chain: Regulatory protein RecX (166 aa).

The protein belongs to the RecX family.

It is found in the cytoplasm. Functionally, modulates RecA activity. The sequence is that of Regulatory protein RecX from Klebsiella pneumoniae subsp. pneumoniae (strain ATCC 700721 / MGH 78578).